The following is a 352-amino-acid chain: Molybdenum import ATP-binding protein ModC (352 aa).

The region spanning 1–229 (MLELNFSQTL…SVMHPWLPKE (229 aa)) is the ABC transporter domain. 31 to 38 (GVSGAGKT) lines the ATP pocket. The Mop domain occupies 289-352 (QTSIRNVLRA…AQVKSVSITA (64 aa)).

This sequence belongs to the ABC transporter superfamily. Molybdate importer (TC 3.A.1.8) family. In terms of assembly, the complex is composed of two ATP-binding proteins (ModC), two transmembrane proteins (ModB) and a solute-binding protein (ModA).

The protein resides in the cell inner membrane. It catalyses the reaction molybdate(out) + ATP + H2O = molybdate(in) + ADP + phosphate + H(+). Part of the ABC transporter complex ModABC involved in molybdenum import. Responsible for energy coupling to the transport system. The chain is Molybdenum import ATP-binding protein ModC from Salmonella typhi.